The chain runs to 207 residues: Sodium/potassium-transporting ATPase subunit beta-1-interacting protein 1 (207 aa).

The next 3 helical transmembrane spans lie at 2–22 (GKCSGRCTLVAFCCLQLVAAL), 35–55 (APILANFLHIMAVILGIFGTV), and 62–82 (LILYAAWLVLWVGWNAFIICF). N-linked (GlcNAc...) asparagine glycosylation is present at Asn100. A helical transmembrane segment spans residues 147-167 (ALSSALQIFLALFGFVFACYV).

Belongs to the NKAIN family. In terms of assembly, interacts with ATP1B1 C-terminus. Detected in the brain only and specifically in neurons. Expressed in multiple regions such as cerebral cortex, thalamus, hippocampus, olfactory bulb and brainstem as well as in cerebellum with high expression in granular cell layer.

The protein resides in the cell membrane. The protein is Sodium/potassium-transporting ATPase subunit beta-1-interacting protein 1 (Nkain1) of Mus musculus (Mouse).